The sequence spans 966 residues: Glycine dehydrogenase (decarboxylating) (966 aa).

Lysine 713 carries the post-translational modification N6-(pyridoxal phosphate)lysine.

Belongs to the GcvP family. As to quaternary structure, the glycine cleavage system is composed of four proteins: P, T, L and H. Pyridoxal 5'-phosphate serves as cofactor.

It catalyses the reaction N(6)-[(R)-lipoyl]-L-lysyl-[glycine-cleavage complex H protein] + glycine + H(+) = N(6)-[(R)-S(8)-aminomethyldihydrolipoyl]-L-lysyl-[glycine-cleavage complex H protein] + CO2. In terms of biological role, the glycine cleavage system catalyzes the degradation of glycine. The P protein binds the alpha-amino group of glycine through its pyridoxal phosphate cofactor; CO(2) is released and the remaining methylamine moiety is then transferred to the lipoamide cofactor of the H protein. In Psychromonas ingrahamii (strain DSM 17664 / CCUG 51855 / 37), this protein is Glycine dehydrogenase (decarboxylating).